A 757-amino-acid polypeptide reads, in one-letter code: Cellulose synthase-like protein B1 (757 aa).

2 helical membrane-spanning segments follow: residues 18-38 and 50-70; these read TNYF…SLLL and VWLV…LITC. Aspartate 136 is a catalytic residue. Positions 186–216 form a coiled coil; it reads EFNRDWEKTKREYEKLRRKVEDATGDSHMLD. Aspartate 462 is an active-site residue. The next 6 membrane-spanning stretches (helical) occupy residues 533–553, 569–589, 615–635, 674–694, 710–730, and 737–757; these read LAYL…YCLL, LYLG…LWEF, LFSI…VFII, FLPG…FSVG, AEAC…MGLF, and TPLS…VFSV.

Belongs to the glycosyltransferase 2 family. Plant cellulose synthase-like B subfamily. Expressed in young seedlings, primarily in the vascular tissue.

The protein resides in the golgi apparatus membrane. In terms of biological role, thought to be a Golgi-localized beta-glycan synthase that polymerize the backbones of noncellulosic polysaccharides (hemicelluloses) of plant cell wall. The protein is Cellulose synthase-like protein B1 (CSLB1) of Arabidopsis thaliana (Mouse-ear cress).